We begin with the raw amino-acid sequence, 517 residues long: Protein translocase subunit SecD (517 aa).

6 consecutive transmembrane segments (helical) span residues 5–25 (LRWITILIVFVVSLFFMFPLD), 357–377 (IWAGIIGVAAVIIFMLIYYKF), 380–400 (FIASIALLSNAIIILGAMGMF), 407–427 (PGIAGLILTMGMAIDANVLIF), 455–475 (IIDSNITTLIAGLVLFQFGTG), and 479–499 (GFAVTLTIGILSSIFTAVTLS).

Belongs to the SecD/SecF family. SecD subfamily. As to quaternary structure, forms a complex with SecF. Part of the essential Sec protein translocation apparatus which comprises SecA, SecYEG and auxiliary proteins SecDF. Other proteins may also be involved.

The protein resides in the cell inner membrane. In terms of biological role, part of the Sec protein translocase complex. Interacts with the SecYEG preprotein conducting channel. SecDF uses the proton motive force (PMF) to complete protein translocation after the ATP-dependent function of SecA. This chain is Protein translocase subunit SecD, found in Calditerrivibrio nitroreducens (strain DSM 19672 / NBRC 101217 / Yu37-1).